Reading from the N-terminus, the 358-residue chain is Nicotinate-nucleotide--dimethylbenzimidazole phosphoribosyltransferase (358 aa).

The active-site Proton acceptor is Glu-314.

It belongs to the CobT family.

It carries out the reaction 5,6-dimethylbenzimidazole + nicotinate beta-D-ribonucleotide = alpha-ribazole 5'-phosphate + nicotinate + H(+). It functions in the pathway nucleoside biosynthesis; alpha-ribazole biosynthesis; alpha-ribazole from 5,6-dimethylbenzimidazole: step 1/2. Functionally, catalyzes the synthesis of alpha-ribazole-5'-phosphate from nicotinate mononucleotide (NAMN) and 5,6-dimethylbenzimidazole (DMB). This is Nicotinate-nucleotide--dimethylbenzimidazole phosphoribosyltransferase from Mycobacterium marinum (strain ATCC BAA-535 / M).